A 277-amino-acid polypeptide reads, in one-letter code: Co-chaperone protein DjlA (277 aa).

Residues 1–6 (MRYWGK) are Periplasmic-facing. Residues 7–31 (LLGLVLGVMYAPGVVGALLGLLVGH) form a helical membrane-spanning segment. The Cytoplasmic portion of the chain corresponds to 32-277 (MVDRALGAKR…DLIKREKGFK (246 aa)). Residues 211 to 277 (DACKVLGVNS…DLIKREKGFK (67 aa)) form the J domain.

As to quaternary structure, homodimer.

Its subcellular location is the cell inner membrane. Regulatory DnaK co-chaperone. Direct interaction between DnaK and DjlA is needed for the induction of the wcaABCDE operon, involved in the synthesis of a colanic acid polysaccharide capsule, possibly through activation of the RcsB/RcsC phosphotransfer signaling pathway. The colanic acid capsule may help the bacterium survive conditions outside the host. The chain is Co-chaperone protein DjlA from Yersinia pestis.